The chain runs to 296 residues: Nitrogenase iron protein (296 aa).

12–19 (GKGGIGKS) provides a ligand contact to ATP. Cys-100 serves as a coordination point for [4Fe-4S] cluster. Arg-103 is modified (ADP-ribosylarginine; by dinitrogenase reductase ADP-ribosyltransferase). Cys-134 contributes to the [4Fe-4S] cluster binding site.

This sequence belongs to the NifH/BchL/ChlL family. Homodimer. Requires [4Fe-4S] cluster as cofactor. The reversible ADP-ribosylation of Arg-103 inactivates the nitrogenase reductase and regulates nitrogenase activity.

The catalysed reaction is N2 + 8 reduced [2Fe-2S]-[ferredoxin] + 16 ATP + 16 H2O = H2 + 8 oxidized [2Fe-2S]-[ferredoxin] + 2 NH4(+) + 16 ADP + 16 phosphate + 6 H(+). The key enzymatic reactions in nitrogen fixation are catalyzed by the nitrogenase complex, which has 2 components: the iron protein and the molybdenum-iron protein. The sequence is that of Nitrogenase iron protein from Acidithiobacillus ferrooxidans (strain ATCC 23270 / DSM 14882 / CIP 104768 / NCIMB 8455) (Ferrobacillus ferrooxidans (strain ATCC 23270)).